The following is a 234-amino-acid chain: 7-cyano-7-deazaguanine synthase (234 aa).

7–17 contributes to the ATP binding site; it reads LSGGLDSAVCM. Residues Cys197, Cys208, Cys211, and Cys214 each coordinate Zn(2+).

The protein belongs to the QueC family. Requires Zn(2+) as cofactor.

It carries out the reaction 7-carboxy-7-deazaguanine + NH4(+) + ATP = 7-cyano-7-deazaguanine + ADP + phosphate + H2O + H(+). Its pathway is purine metabolism; 7-cyano-7-deazaguanine biosynthesis. Catalyzes the ATP-dependent conversion of 7-carboxy-7-deazaguanine (CDG) to 7-cyano-7-deazaguanine (preQ(0)). The sequence is that of 7-cyano-7-deazaguanine synthase from Methanococcus aeolicus (strain ATCC BAA-1280 / DSM 17508 / OCM 812 / Nankai-3).